The chain runs to 310 residues: Small ribosomal subunit biogenesis GTPase RsgA 2 (310 aa).

Residues 77–238 (LSKQSHILAA…IIDTPGIKGF (162 aa)) form the CP-type G domain. Residues 126 to 129 (NKVD) and 180 to 188 (GHSGVGKST) contribute to the GTP site. Cys-262, Cys-267, His-269, and Cys-275 together coordinate Zn(2+).

The protein belongs to the TRAFAC class YlqF/YawG GTPase family. RsgA subfamily. In terms of assembly, monomer. Associates with 30S ribosomal subunit, binds 16S rRNA. Zn(2+) serves as cofactor.

The protein localises to the cytoplasm. Functionally, one of several proteins that assist in the late maturation steps of the functional core of the 30S ribosomal subunit. Helps release RbfA from mature subunits. May play a role in the assembly of ribosomal proteins into the subunit. Circularly permuted GTPase that catalyzes slow GTP hydrolysis, GTPase activity is stimulated by the 30S ribosomal subunit. The chain is Small ribosomal subunit biogenesis GTPase RsgA 2 from Bacteroides thetaiotaomicron (strain ATCC 29148 / DSM 2079 / JCM 5827 / CCUG 10774 / NCTC 10582 / VPI-5482 / E50).